The following is a 203-amino-acid chain: Small ribosomal subunit protein uS4 (203 aa).

The 61-residue stretch at 93-153 (QRLDSLVYRL…DKSKNIVPIQ (61 aa)) folds into the S4 RNA-binding domain.

The protein belongs to the universal ribosomal protein uS4 family. Part of the 30S ribosomal subunit. Contacts protein S5. The interaction surface between S4 and S5 is involved in control of translational fidelity.

One of the primary rRNA binding proteins, it binds directly to 16S rRNA where it nucleates assembly of the body of the 30S subunit. Functionally, with S5 and S12 plays an important role in translational accuracy. This is Small ribosomal subunit protein uS4 from Leuconostoc citreum (strain KM20).